Consider the following 307-residue polypeptide: 4-hydroxythreonine-4-phosphate dehydrogenase (307 aa).

Residues His126 and Thr127 each contribute to the substrate site. Residues His156, His195, and His251 each contribute to the a divalent metal cation site. Residues Lys259, Asn268, and Arg277 each coordinate substrate.

Belongs to the PdxA family. Homodimer. Requires Zn(2+) as cofactor. It depends on Mg(2+) as a cofactor. Co(2+) is required as a cofactor.

It is found in the cytoplasm. It catalyses the reaction 4-(phosphooxy)-L-threonine + NAD(+) = 3-amino-2-oxopropyl phosphate + CO2 + NADH. The protein operates within cofactor biosynthesis; pyridoxine 5'-phosphate biosynthesis; pyridoxine 5'-phosphate from D-erythrose 4-phosphate: step 4/5. Functionally, catalyzes the NAD(P)-dependent oxidation of 4-(phosphooxy)-L-threonine (HTP) into 2-amino-3-oxo-4-(phosphooxy)butyric acid which spontaneously decarboxylates to form 3-amino-2-oxopropyl phosphate (AHAP). The chain is 4-hydroxythreonine-4-phosphate dehydrogenase from Helicobacter pylori (strain Shi470).